The following is a 311-amino-acid chain: Short chain dehydrogenase opdN (311 aa).

6 residues coordinate NADP(+): L48, K73, E96, N123, Y217, and K221. The Proton donor role is filled by Y217. The Lowers pKa of active site Tyr role is filled by K221.

The protein belongs to the short-chain dehydrogenases/reductases (SDR) family.

It participates in secondary metabolite biosynthesis. In terms of biological role, short chain dehydrogenase; part of the gene cluster that mediates the biosynthesis of oxopyrrolidines, polyketide-amino acid hybrid compounds with feature structures of tetramic acid. Does not seem to play a role in oxopyrrolidines A and B biosynthesis. May be involved in further modifications of these oxopyrrolidines. The polypeptide is Short chain dehydrogenase opdN (Penicillium oxalicum (strain 114-2 / CGMCC 5302) (Penicillium decumbens)).